The following is a 294-amino-acid chain: Glyceraldehyde-3-phosphate dehydrogenase (294 aa).

NAD(+) is bound by residues Asp19, Lys63, and Thr105. Residues 134–136 and Thr165 each bind D-glyceraldehyde 3-phosphate; that span reads SCT. The Nucleophile role is filled by Cys135. The tract at residues 169 to 188 is disordered; sequence KTVDGPSHKDWRGGRGASQN. Residues 194 to 195 and Arg217 each bind D-glyceraldehyde 3-phosphate; that span reads TG.

It belongs to the glyceraldehyde-3-phosphate dehydrogenase family. In terms of assembly, homotetramer.

The protein localises to the cytoplasm. The catalysed reaction is D-glyceraldehyde 3-phosphate + phosphate + NAD(+) = (2R)-3-phospho-glyceroyl phosphate + NADH + H(+). It functions in the pathway carbohydrate degradation; glycolysis; pyruvate from D-glyceraldehyde 3-phosphate: step 1/5. In terms of biological role, catalyzes the oxidative phosphorylation of glyceraldehyde 3-phosphate (G3P) to 1,3-bisphosphoglycerate (BPG) using the cofactor NAD. The first reaction step involves the formation of a hemiacetal intermediate between G3P and a cysteine residue, and this hemiacetal intermediate is then oxidized to a thioester, with concomitant reduction of NAD to NADH. The reduced NADH is then exchanged with the second NAD, and the thioester is attacked by a nucleophilic inorganic phosphate to produce BPG. The sequence is that of Glyceraldehyde-3-phosphate dehydrogenase (gap) from Serratia marcescens.